The chain runs to 466 residues: 3-isopropylmalate dehydratase large subunit (466 aa).

[4Fe-4S] cluster contacts are provided by cysteine 347, cysteine 407, and cysteine 410.

The protein belongs to the aconitase/IPM isomerase family. LeuC type 1 subfamily. In terms of assembly, heterodimer of LeuC and LeuD. The cofactor is [4Fe-4S] cluster.

It catalyses the reaction (2R,3S)-3-isopropylmalate = (2S)-2-isopropylmalate. It functions in the pathway amino-acid biosynthesis; L-leucine biosynthesis; L-leucine from 3-methyl-2-oxobutanoate: step 2/4. Functionally, catalyzes the isomerization between 2-isopropylmalate and 3-isopropylmalate, via the formation of 2-isopropylmaleate. In Escherichia coli (strain 55989 / EAEC), this protein is 3-isopropylmalate dehydratase large subunit.